We begin with the raw amino-acid sequence, 199 residues long: Holliday junction branch migration complex subunit RuvA (199 aa).

A domain I region spans residues 1–63; sequence MIAYIEGKLA…EDAHTLFGFA (63 aa). The domain II stretch occupies residues 64-142; sequence DLMEKEMFLH…KDALLAGSDS (79 aa). Residues 143–151 are flexible linker; it reads KQNFSVSHN. Positions 151 to 199 are domain III; sequence NSIRSEALTALITLGFTKTVAEKNLDLILKGNSNSFTLEDLIKQALKMS.

The protein belongs to the RuvA family. Homotetramer. Forms an RuvA(8)-RuvB(12)-Holliday junction (HJ) complex. HJ DNA is sandwiched between 2 RuvA tetramers; dsDNA enters through RuvA and exits via RuvB. An RuvB hexamer assembles on each DNA strand where it exits the tetramer. Each RuvB hexamer is contacted by two RuvA subunits (via domain III) on 2 adjacent RuvB subunits; this complex drives branch migration. In the full resolvosome a probable DNA-RuvA(4)-RuvB(12)-RuvC(2) complex forms which resolves the HJ.

It localises to the cytoplasm. Its function is as follows. The RuvA-RuvB-RuvC complex processes Holliday junction (HJ) DNA during genetic recombination and DNA repair, while the RuvA-RuvB complex plays an important role in the rescue of blocked DNA replication forks via replication fork reversal (RFR). RuvA specifically binds to HJ cruciform DNA, conferring on it an open structure. The RuvB hexamer acts as an ATP-dependent pump, pulling dsDNA into and through the RuvAB complex. HJ branch migration allows RuvC to scan DNA until it finds its consensus sequence, where it cleaves and resolves the cruciform DNA. The protein is Holliday junction branch migration complex subunit RuvA of Cytophaga hutchinsonii (strain ATCC 33406 / DSM 1761 / CIP 103989 / NBRC 15051 / NCIMB 9469 / D465).